A 301-amino-acid chain; its full sequence is Nodulation protein D 3 (301 aa).

The HTH lysR-type domain occupies 6 to 63 (LDLNLLVVLDALLTARNLTAAASSINLSQPAMSAAVARLRNYFNDELFTMSGRERVLT). A DNA-binding region (H-T-H motif) is located at residues 23–43 (LTAAASSINLSQPAMSAAVAR).

Belongs to the LysR transcriptional regulatory family.

NodD regulates the expression of the nodABCFE genes which encode other nodulation proteins. NodD is also a negative regulator of its own expression. Binds flavonoids as inducers. The sequence is that of Nodulation protein D 3 (nodD3) from Mesorhizobium japonicum (strain LMG 29417 / CECT 9101 / MAFF 303099) (Mesorhizobium loti (strain MAFF 303099)).